The following is a 241-amino-acid chain: Acyl-protein thioesterase 1 (241 aa).

Catalysis depends on charge relay system residues Ser122, Asp178, and His211.

This sequence belongs to the AB hydrolase superfamily. AB hydrolase 2 family.

It is found in the cytoplasm. The protein resides in the nucleus. The enzyme catalyses S-hexadecanoyl-L-cysteinyl-[protein] + H2O = L-cysteinyl-[protein] + hexadecanoate + H(+). Functionally, hydrolyzes fatty acids from S-acylated cysteine residues in proteins with a strong preference for palmitoylated G-alpha proteins over other acyl substrates. Mediates the deacylation of G-alpha proteins such as GPA1 in vivo, but has weak or no activity toward palmitoylated Ras proteins. Has weak lysophospholipase activity in vitro; however such activity may not exist in vivo. The chain is Acyl-protein thioesterase 1 from Aspergillus fumigatus (strain ATCC MYA-4609 / CBS 101355 / FGSC A1100 / Af293) (Neosartorya fumigata).